The sequence spans 117 residues: SPbeta prophage-derived uncharacterized protein YosL (117 aa).

The protein is SPbeta prophage-derived uncharacterized protein YosL (yosL) of Bacillus subtilis (strain 168).